A 255-amino-acid polypeptide reads, in one-letter code: Tryptophan synthase alpha chain (255 aa).

Active-site proton acceptor residues include Glu51 and Asp62.

The protein belongs to the TrpA family. Tetramer of two alpha and two beta chains.

It carries out the reaction (1S,2R)-1-C-(indol-3-yl)glycerol 3-phosphate + L-serine = D-glyceraldehyde 3-phosphate + L-tryptophan + H2O. The protein operates within amino-acid biosynthesis; L-tryptophan biosynthesis; L-tryptophan from chorismate: step 5/5. Functionally, the alpha subunit is responsible for the aldol cleavage of indoleglycerol phosphate to indole and glyceraldehyde 3-phosphate. The polypeptide is Tryptophan synthase alpha chain (Maridesulfovibrio salexigens (strain ATCC 14822 / DSM 2638 / NCIMB 8403 / VKM B-1763) (Desulfovibrio salexigens)).